The following is an 838-amino-acid chain: Translation initiation factor IF-2 (838 aa).

The tract at residues Met1–Gln235 is disordered. Residues Ser18–His27 are compositionally biased toward polar residues. The span at Ser50–Ser60 shows a compositional bias: low complexity. Positions Lys88–Arg156 are enriched in basic and acidic residues. Low complexity predominate over residues Pro162–Pro177. Residues Ser187–Arg208 show a composition bias toward basic and acidic residues. A tr-type G domain is found at Pro335–Lys509. The segment at Gly344–Thr351 is G1. Residue Gly344–Thr351 coordinates GTP. Residues Gly369 to His373 form a G2 region. The segment at Asp391 to Gly394 is G3. GTP contacts are provided by residues Asp391–His395 and Asn445–Asp448. The tract at residues Asn445–Asp448 is G4. Residues Ser481 to Lys483 are G5.

This sequence belongs to the TRAFAC class translation factor GTPase superfamily. Classic translation factor GTPase family. IF-2 subfamily.

The protein localises to the cytoplasm. Functionally, one of the essential components for the initiation of protein synthesis. Protects formylmethionyl-tRNA from spontaneous hydrolysis and promotes its binding to the 30S ribosomal subunits. Also involved in the hydrolysis of GTP during the formation of the 70S ribosomal complex. This chain is Translation initiation factor IF-2, found in Cereibacter sphaeroides (strain ATCC 17025 / ATH 2.4.3) (Rhodobacter sphaeroides).